We begin with the raw amino-acid sequence, 431 residues long: UDP-N-acetylmuramate--L-alanine ligase (431 aa).

108-114 serves as a coordination point for ATP; that stretch reads GAHGKST.

The protein belongs to the MurCDEF family.

The protein resides in the cytoplasm. It carries out the reaction UDP-N-acetyl-alpha-D-muramate + L-alanine + ATP = UDP-N-acetyl-alpha-D-muramoyl-L-alanine + ADP + phosphate + H(+). It functions in the pathway cell wall biogenesis; peptidoglycan biosynthesis. Its function is as follows. Cell wall formation. The polypeptide is UDP-N-acetylmuramate--L-alanine ligase (Campylobacter jejuni subsp. jejuni serotype O:6 (strain 81116 / NCTC 11828)).